Consider the following 692-residue polypeptide: Penicillin-binding protein activator LpoA (692 aa).

The first 26 residues, 1–26 (MLSSITVRTKSGRLIPLVLAATLLAA), serve as a signal peptide directing secretion. Cysteine 27 is lipidated: N-palmitoyl cysteine. Cysteine 27 carries S-diacylglycerol cysteine lipidation. Disordered regions lie at residues 297–316 (AAAATDNGAPASSGTLAAAT) and 324–373 (VNAA…PDAH). Residues 332-363 (PSAQGTDAAAPAAPNDSAALPPLDAAGDPIAP) show a composition bias toward low complexity.

The protein belongs to the LpoA family. As to quaternary structure, interacts with PBP1a.

Its subcellular location is the cell outer membrane. Functionally, regulator of peptidoglycan synthesis that is essential for the function of penicillin-binding protein 1A (PBP1a). The sequence is that of Penicillin-binding protein activator LpoA from Edwardsiella piscicida.